A 550-amino-acid polypeptide reads, in one-letter code: T-complex protein 1 subunit eta (550 aa).

The tract at residues 529–550 is disordered; the sequence is SESANAGMMPPQGAGRGRGMPM.

The protein belongs to the TCP-1 chaperonin family. In terms of assembly, heterooligomeric complex of about 850 to 900 kDa that forms two stacked rings, 12 to 16 nm in diameter.

The protein resides in the cytoplasm. Its function is as follows. Molecular chaperone; assists the folding of proteins upon ATP hydrolysis. Known to play a role, in vitro, in the folding of actin and tubulin. In yeast may play a role in mitotic spindle formation. The sequence is that of T-complex protein 1 subunit eta (CCT7) from Saccharomyces cerevisiae (strain ATCC 204508 / S288c) (Baker's yeast).